The sequence spans 77 residues: NAD(P)H-quinone oxidoreductase subunit L (77 aa).

2 helical membrane passes run 12–32 and 47–67; these read LIAY…LLFY and LGIY…SPFL.

It belongs to the complex I NdhL subunit family. In terms of assembly, NDH-1 can be composed of about 15 different subunits; different subcomplexes with different compositions have been identified which probably have different functions.

The protein resides in the cellular thylakoid membrane. It carries out the reaction a plastoquinone + NADH + (n+1) H(+)(in) = a plastoquinol + NAD(+) + n H(+)(out). It catalyses the reaction a plastoquinone + NADPH + (n+1) H(+)(in) = a plastoquinol + NADP(+) + n H(+)(out). Its function is as follows. NDH-1 shuttles electrons from an unknown electron donor, via FMN and iron-sulfur (Fe-S) centers, to quinones in the respiratory and/or the photosynthetic chain. The immediate electron acceptor for the enzyme in this species is believed to be plastoquinone. Couples the redox reaction to proton translocation, and thus conserves the redox energy in a proton gradient. Cyanobacterial NDH-1 also plays a role in inorganic carbon-concentration. This chain is NAD(P)H-quinone oxidoreductase subunit L, found in Prochlorococcus marinus (strain AS9601).